The chain runs to 672 residues: uncharacterized protein (672 aa).

A compositionally biased stretch (basic and acidic residues) spans 1–10 (MAKSDGDDPL). Positions 1-40 (MAKSDGDDPLRPASPRLRSSRRHSLRYSAYTGGPDPLAPP) are disordered.

This is an uncharacterized protein from Mycobacterium tuberculosis (strain CDC 1551 / Oshkosh).